Reading from the N-terminus, the 217-residue chain is Probable septum site-determining protein MinC (217 aa).

This sequence belongs to the MinC family. In terms of assembly, interacts with MinD and FtsZ.

Cell division inhibitor that blocks the formation of polar Z ring septums. Rapidly oscillates between the poles of the cell to destabilize FtsZ filaments that have formed before they mature into polar Z rings. Prevents FtsZ polymerization. In Pelotomaculum thermopropionicum (strain DSM 13744 / JCM 10971 / SI), this protein is Probable septum site-determining protein MinC.